A 160-amino-acid chain; its full sequence is UPF0479 membrane protein YER190C-B (160 aa).

Helical transmembrane passes span 39-59 and 136-156; these read IVFCLPFFPALFFVPVQKVLQ and VPMIWLDVFQVFFVFLVISQH.

The protein belongs to the UPF0479 family.

It localises to the membrane. In Saccharomyces cerevisiae (strain ATCC 204508 / S288c) (Baker's yeast), this protein is UPF0479 membrane protein YER190C-B.